The primary structure comprises 54 residues: Ovomucoid (54 aa).

The region spanning 4 to 54 is the Kazal-like domain; the sequence is VDCSDYPKPACRMEYMPLCGSDNKTYGNKCNFCNAVVDSNGTLTLSHFGKC. Cystine bridges form between Cys-6–Cys-36, Cys-14–Cys-33, and Cys-22–Cys-54. Asn-43 is a glycosylation site (N-linked (GlcNAc...) asparagine).

It is found in the secreted. The sequence is that of Ovomucoid from Cereopsis novaehollandiae (Cape Barren goose).